Reading from the N-terminus, the 321-residue chain is tRNA U34 carboxymethyltransferase (321 aa).

Carboxy-S-adenosyl-L-methionine contacts are provided by residues Lys90, Trp104, Lys109, Gly129, 151–153 (DPT), 180–181 (IE), Met195, Tyr199, and Arg314.

The protein belongs to the class I-like SAM-binding methyltransferase superfamily. CmoB family. Homotetramer.

It carries out the reaction carboxy-S-adenosyl-L-methionine + 5-hydroxyuridine(34) in tRNA = 5-carboxymethoxyuridine(34) in tRNA + S-adenosyl-L-homocysteine + H(+). Functionally, catalyzes carboxymethyl transfer from carboxy-S-adenosyl-L-methionine (Cx-SAM) to 5-hydroxyuridine (ho5U) to form 5-carboxymethoxyuridine (cmo5U) at position 34 in tRNAs. This is tRNA U34 carboxymethyltransferase from Haemophilus influenzae (strain 86-028NP).